The chain runs to 251 residues: Ubiquinone/menaquinone biosynthesis C-methyltransferase UbiE (251 aa).

Residues T74, D95, and N123–A124 each bind S-adenosyl-L-methionine.

This sequence belongs to the class I-like SAM-binding methyltransferase superfamily. MenG/UbiE family.

The catalysed reaction is a 2-demethylmenaquinol + S-adenosyl-L-methionine = a menaquinol + S-adenosyl-L-homocysteine + H(+). It carries out the reaction a 2-methoxy-6-(all-trans-polyprenyl)benzene-1,4-diol + S-adenosyl-L-methionine = a 5-methoxy-2-methyl-3-(all-trans-polyprenyl)benzene-1,4-diol + S-adenosyl-L-homocysteine + H(+). It participates in quinol/quinone metabolism; menaquinone biosynthesis; menaquinol from 1,4-dihydroxy-2-naphthoate: step 2/2. Its pathway is cofactor biosynthesis; ubiquinone biosynthesis. In terms of biological role, methyltransferase required for the conversion of demethylmenaquinol (DMKH2) to menaquinol (MKH2) and the conversion of 2-polyprenyl-6-methoxy-1,4-benzoquinol (DDMQH2) to 2-polyprenyl-3-methyl-6-methoxy-1,4-benzoquinol (DMQH2). In Shewanella halifaxensis (strain HAW-EB4), this protein is Ubiquinone/menaquinone biosynthesis C-methyltransferase UbiE.